Reading from the N-terminus, the 343-residue chain is Uroporphyrinogen decarboxylase (343 aa).

Residues 21-25 (RQAGR), aspartate 71, tyrosine 148, serine 203, and histidine 316 contribute to the substrate site.

The protein belongs to the uroporphyrinogen decarboxylase family. As to quaternary structure, homodimer.

It localises to the cytoplasm. It carries out the reaction uroporphyrinogen III + 4 H(+) = coproporphyrinogen III + 4 CO2. Its pathway is porphyrin-containing compound metabolism; protoporphyrin-IX biosynthesis; coproporphyrinogen-III from 5-aminolevulinate: step 4/4. Its function is as follows. Catalyzes the decarboxylation of four acetate groups of uroporphyrinogen-III to yield coproporphyrinogen-III. In Campylobacter fetus subsp. fetus (strain 82-40), this protein is Uroporphyrinogen decarboxylase.